The sequence spans 146 residues: Putative pre-16S rRNA nuclease (146 aa).

It belongs to the YqgF nuclease family.

It localises to the cytoplasm. In terms of biological role, could be a nuclease involved in processing of the 5'-end of pre-16S rRNA. This chain is Putative pre-16S rRNA nuclease, found in Paraburkholderia phytofirmans (strain DSM 17436 / LMG 22146 / PsJN) (Burkholderia phytofirmans).